A 378-amino-acid polypeptide reads, in one-letter code: Flagellin E (378 aa).

2 coiled-coil regions span residues 98-139 (QSAN…KLLN) and 311-339 (MQNR…IKDA).

Belongs to the bacterial flagellin family. Heteromer of multiple flagellin subunits including FlaA, FlaB, FlaC, FlaD and FlaE.

Its subcellular location is the secreted. It localises to the bacterial flagellum. Flagellin is the subunit protein which polymerizes to form the filaments of bacterial flagella. FlaE is not essential for flagellar synthesis and motility. In Vibrio cholerae serotype O1 (strain ATCC 39541 / Classical Ogawa 395 / O395), this protein is Flagellin E (flaE).